The chain runs to 126 residues: Aspartate 1-decarboxylase (126 aa).

Ser-25 functions as the Schiff-base intermediate with substrate; via pyruvic acid in the catalytic mechanism. Pyruvic acid (Ser) is present on Ser-25. Thr-57 is a binding site for substrate. Tyr-58 serves as the catalytic Proton donor. 73-75 contributes to the substrate binding site; the sequence is GAA.

It belongs to the PanD family. In terms of assembly, heterooctamer of four alpha and four beta subunits. Requires pyruvate as cofactor. Post-translationally, is synthesized initially as an inactive proenzyme, which is activated by self-cleavage at a specific serine bond to produce a beta-subunit with a hydroxyl group at its C-terminus and an alpha-subunit with a pyruvoyl group at its N-terminus.

It localises to the cytoplasm. It catalyses the reaction L-aspartate + H(+) = beta-alanine + CO2. Its pathway is cofactor biosynthesis; (R)-pantothenate biosynthesis; beta-alanine from L-aspartate: step 1/1. Catalyzes the pyruvoyl-dependent decarboxylation of aspartate to produce beta-alanine. In Pseudomonas aeruginosa (strain LESB58), this protein is Aspartate 1-decarboxylase.